The chain runs to 299 residues: Very long chain fatty acid elongase 5 (299 aa).

An N-acetylmethionine modification is found at methionine 1. Transmembrane regions (helical) follow at residues 26–46 (WFLL…LLIV), 64–84 (ILVV…YELV), 112–132 (VLWW…FFIL), 139–158 (ITVL…WFVM), 168–187 (FGAT…YGLS), 205–225 (GQLV…IWPC), and 227–247 (FPLG…ALFT).

The protein belongs to the ELO family. ELOVL5 subfamily. In terms of assembly, interacts with TECR. In terms of tissue distribution, highly expressed in lung and brain.

Its subcellular location is the endoplasmic reticulum membrane. It is found in the cell projection. It localises to the dendrite. It carries out the reaction a very-long-chain acyl-CoA + malonyl-CoA + H(+) = a very-long-chain 3-oxoacyl-CoA + CO2 + CoA. The enzyme catalyses (6Z,9Z,12Z,15Z)-octadecatetraenoyl-CoA + malonyl-CoA + H(+) = (8Z,11Z,14Z,17Z)-3-oxoicosatetraenoyl-CoA + CO2 + CoA. It catalyses the reaction (6Z,9Z,12Z)-octadecatrienoyl-CoA + malonyl-CoA + H(+) = (8Z,11Z,14Z)-3-oxoeicosatrienoyl-CoA + CO2 + CoA. The catalysed reaction is (5Z,8Z,11Z,14Z,17Z)-eicosapentaenoyl-CoA + malonyl-CoA + H(+) = 3-oxo-(7Z,10Z,13Z,16Z,19Z)-docosapentaenoyl-CoA + CO2 + CoA. It carries out the reaction (5Z,8Z,11Z,14Z)-eicosatetraenoyl-CoA + malonyl-CoA + H(+) = (7Z,10Z,13Z,16Z)-3-oxodocosatetraenoyl-CoA + CO2 + CoA. The enzyme catalyses (9Z,12Z,15Z)-octadecatrienoyl-CoA + malonyl-CoA + H(+) = (11Z,14Z,17Z)-3-oxoeicosatrienoyl-CoA + CO2 + CoA. It catalyses the reaction (9Z)-hexadecenoyl-CoA + malonyl-CoA + H(+) = 3-oxo-(11Z)-octadecenoyl-CoA + CO2 + CoA. The catalysed reaction is (9Z)-octadecenoyl-CoA + malonyl-CoA + H(+) = 3-oxo-(11Z)-eicosenoyl-CoA + CO2 + CoA. It carries out the reaction (11Z)-octadecenoyl-CoA + malonyl-CoA + H(+) = 3-oxo-(13Z)-eicosenoyl-CoA + CO2 + CoA. The enzyme catalyses (9Z,12Z)-octadecadienoyl-CoA + malonyl-CoA + H(+) = (11Z,14Z)-3-oxoicosa-11,14-dienoyl-CoA + CO2 + CoA. Its pathway is lipid metabolism; polyunsaturated fatty acid biosynthesis. Catalyzes the first and rate-limiting reaction of the four reactions that constitute the long-chain fatty acids elongation cycle. This endoplasmic reticulum-bound enzymatic process allows the addition of 2 carbons to the chain of long- and very long-chain fatty acids (VLCFAs) per cycle. Condensing enzyme that acts specifically toward polyunsaturated acyl-CoA with the higher activity toward C18:3(n-6) acyl-CoA. May participate in the production of monounsaturated and of polyunsaturated VLCFAs of different chain lengths that are involved in multiple biological processes as precursors of membrane lipids and lipid mediators. In conditions where the essential linoleic and alpha linoleic fatty acids are lacking it is also involved in the synthesis of Mead acid from oleic acid. The chain is Very long chain fatty acid elongase 5 from Rattus norvegicus (Rat).